The primary structure comprises 150 residues: 3-hydroxyacyl-[acyl-carrier-protein] dehydratase FabZ (150 aa).

H57 is a catalytic residue.

This sequence belongs to the thioester dehydratase family. FabZ subfamily.

The protein resides in the cytoplasm. It catalyses the reaction a (3R)-hydroxyacyl-[ACP] = a (2E)-enoyl-[ACP] + H2O. Functionally, involved in unsaturated fatty acids biosynthesis. Catalyzes the dehydration of short chain beta-hydroxyacyl-ACPs and long chain saturated and unsaturated beta-hydroxyacyl-ACPs. This Mannheimia succiniciproducens (strain KCTC 0769BP / MBEL55E) protein is 3-hydroxyacyl-[acyl-carrier-protein] dehydratase FabZ.